A 406-amino-acid chain; its full sequence is Putative phosphate permease PH0640 (406 aa).

11 consecutive transmembrane segments (helical) span residues 2–22, 45–65, 83–103, 114–134, 140–160, 182–202, 207–227, 265–285, 288–308, 330–350, and 385–405; these read IPID…AWAI, AVLI…KTVT, VLIY…IIAT, SIIG…IVNW, VVLS…LVFR, FWIG…VLHG, IGIL…TSML, VANA…GLAG, VPVP…GVAT, FTID…GMPI, and FVTV…LLLI.

Belongs to the inorganic phosphate transporter (PiT) (TC 2.A.20) family.

The protein localises to the cell membrane. In terms of biological role, potential transporter for phosphate. In Pyrococcus horikoshii (strain ATCC 700860 / DSM 12428 / JCM 9974 / NBRC 100139 / OT-3), this protein is Putative phosphate permease PH0640.